The primary structure comprises 210 residues: Dephospho-CoA kinase (210 aa).

One can recognise a DPCK domain in the interval 4-201 (IVALTGGICS…NFYIYLSKQN (198 aa)). Residue 12-17 (CSGKTT) coordinates ATP.

The protein belongs to the CoaE family.

Its subcellular location is the cytoplasm. It carries out the reaction 3'-dephospho-CoA + ATP = ADP + CoA + H(+). It functions in the pathway cofactor biosynthesis; coenzyme A biosynthesis; CoA from (R)-pantothenate: step 5/5. Functionally, catalyzes the phosphorylation of the 3'-hydroxyl group of dephosphocoenzyme A to form coenzyme A. The protein is Dephospho-CoA kinase of Buchnera aphidicola subsp. Schizaphis graminum (strain Sg).